The chain runs to 638 residues: Chaperone protein DnaK (638 aa).

Phosphothreonine; by autocatalysis is present on T200. Positions 599–623 (LHMAATAEQQSASTGAGAGSSAKVD) are disordered. A compositionally biased stretch (low complexity) spans 609–620 (SASTGAGAGSSA).

The protein belongs to the heat shock protein 70 family.

Its function is as follows. Acts as a chaperone. In Xylella fastidiosa (strain M12), this protein is Chaperone protein DnaK.